A 363-amino-acid chain; its full sequence is Anthranilate phosphoribosyltransferase (363 aa).

5-phospho-alpha-D-ribose 1-diphosphate-binding positions include Gly-85, 88-89, Thr-93, 95-98, 113-121, and Ala-125; these read GD, NVST, and KHGNRALSS. Anthranilate is bound at residue Gly-85. Ser-97 provides a ligand contact to Mg(2+). Position 116 (Asn-116) interacts with anthranilate. Arg-171 provides a ligand contact to anthranilate. The Mg(2+) site is built by Asp-233 and Glu-234.

This sequence belongs to the anthranilate phosphoribosyltransferase family. In terms of assembly, homodimer. Mg(2+) serves as cofactor.

It catalyses the reaction N-(5-phospho-beta-D-ribosyl)anthranilate + diphosphate = 5-phospho-alpha-D-ribose 1-diphosphate + anthranilate. The protein operates within amino-acid biosynthesis; L-tryptophan biosynthesis; L-tryptophan from chorismate: step 2/5. Catalyzes the transfer of the phosphoribosyl group of 5-phosphorylribose-1-pyrophosphate (PRPP) to anthranilate to yield N-(5'-phosphoribosyl)-anthranilate (PRA). The sequence is that of Anthranilate phosphoribosyltransferase from Gluconobacter oxydans (strain 621H) (Gluconobacter suboxydans).